A 479-amino-acid polypeptide reads, in one-letter code: Cardiolipin synthase A (479 aa).

A run of 2 helical transmembrane segments spans residues 8–28 (IFGY…IHAV) and 38–58 (IAWA…YLVF). PLD phosphodiesterase domains are found at residues 218 to 245 (VNFR…GDEY) and 392 to 419 (QPGF…DNRS). Active-site residues include histidine 223, lysine 225, aspartate 230, histidine 397, lysine 399, and aspartate 404.

It belongs to the phospholipase D family. Cardiolipin synthase subfamily. ClsA sub-subfamily.

It is found in the cell inner membrane. It carries out the reaction 2 a 1,2-diacyl-sn-glycero-3-phospho-(1'-sn-glycerol) = a cardiolipin + glycerol. Its function is as follows. Catalyzes the reversible phosphatidyl group transfer from one phosphatidylglycerol molecule to another to form cardiolipin (CL) (diphosphatidylglycerol) and glycerol. The sequence is that of Cardiolipin synthase A from Pseudomonas fluorescens (strain ATCC BAA-477 / NRRL B-23932 / Pf-5).